The sequence spans 629 residues: tRNA uridine 5-carboxymethylaminomethyl modification enzyme MnmG (629 aa).

Residues 14–19, Val-126, and Ser-181 contribute to the FAD site; that span reads GAGHAG. Position 273–287 (273–287) interacts with NAD(+); it reads GPRYCPSIEDKVVRF. Residue Gln-370 coordinates FAD.

This sequence belongs to the MnmG family. As to quaternary structure, homodimer. Heterotetramer of two MnmE and two MnmG subunits. Requires FAD as cofactor.

The protein resides in the cytoplasm. Its function is as follows. NAD-binding protein involved in the addition of a carboxymethylaminomethyl (cmnm) group at the wobble position (U34) of certain tRNAs, forming tRNA-cmnm(5)s(2)U34. This is tRNA uridine 5-carboxymethylaminomethyl modification enzyme MnmG from Bacillus cereus (strain ATCC 10987 / NRS 248).